We begin with the raw amino-acid sequence, 291 residues long: Urease accessory protein UreD (291 aa).

This sequence belongs to the UreD family. UreD, UreF and UreG form a complex that acts as a GTP-hydrolysis-dependent molecular chaperone, activating the urease apoprotein by helping to assemble the nickel containing metallocenter of UreC. The UreE protein probably delivers the nickel.

It localises to the cytoplasm. Its function is as follows. Required for maturation of urease via the functional incorporation of the urease nickel metallocenter. The sequence is that of Urease accessory protein UreD from Acinetobacter baumannii (strain ATCC 17978 / DSM 105126 / CIP 53.77 / LMG 1025 / NCDC KC755 / 5377).